We begin with the raw amino-acid sequence, 436 residues long: 3-ketoacyl-CoA thiolase (436 aa).

Residue cysteine 99 is the Acyl-thioester intermediate of the active site. Catalysis depends on proton acceptor residues histidine 392 and cysteine 422.

The protein belongs to the thiolase-like superfamily. Thiolase family. As to quaternary structure, heterotetramer of two alpha chains (FadJ) and two beta chains (FadI).

It localises to the cytoplasm. The catalysed reaction is an acyl-CoA + acetyl-CoA = a 3-oxoacyl-CoA + CoA. It participates in lipid metabolism; fatty acid beta-oxidation. In terms of biological role, catalyzes the final step of fatty acid oxidation in which acetyl-CoA is released and the CoA ester of a fatty acid two carbons shorter is formed. The polypeptide is 3-ketoacyl-CoA thiolase (Escherichia coli (strain ATCC 8739 / DSM 1576 / NBRC 3972 / NCIMB 8545 / WDCM 00012 / Crooks)).